The following is a 1733-amino-acid chain: Collagen alpha-1(XXIV) chain (1733 aa).

An N-terminal signal peptide occupies residues 1-35 (MHLGAYRTRHGKVSPTTETKLFLRFIVLCVVWISV). Positions 102–229 (ISLRQPLTVL…TVCQLEIMPS (128 aa)) constitute a Laminin G-like domain. N-linked (GlcNAc...) asparagine glycosylation occurs at Asn157. Residues 257 to 335 (PHTAGMPTRH…SQEHQTPRAQ (79 aa)) are disordered. Positions 312 to 324 (IPNNRSNGSATVH) are enriched in polar residues. N-linked (GlcNAc...) asparagine glycans are attached at residues Asn366, Asn396, and Asn448. Positions 505–1499 (YLRGPKGDPG…GPPGAPGPRR (995 aa)) are disordered. Collagen-like domains follow at residues 506 to 561 (LRGP…PGLS), 577 to 636 (GLVG…KGVR), 679 to 738 (GPAG…KGEQ), 742 to 801 (GEPG…PGQN), 802 to 861 (GPEG…KGEV), 886 to 945 (GSIG…KGQR), 946 to 1005 (GPRG…SGDV), 1006 to 1065 (GPAG…PGPR), 1072 to 1131 (GEEG…PGQR), 1135 to 1189 (GKKG…GIPG), 1191 to 1215 (RGHQ…PGED), 1220 to 1279 (GPPG…KGER), 1316 to 1375 (GVDG…KGEQ), 1376 to 1435 (GLPG…AGIV), and 1439 to 1498 (GPKG…PGPR). Residues 512–524 (DPGPPGPPGPMGI) show a composition bias toward pro residues. 2 stretches are compositionally biased toward low complexity: residues 573 to 599 (PGLL…LPGL) and 699 to 708 (PGVTGSVGPA). The segment covering 776-789 (DPGPQGPSGPPGPE) has biased composition (pro residues). Residues 912–921 (PGPPGAPGPM) are compositionally biased toward pro residues. Over residues 923–944 (PLGLPGLVGARGAPGSPGPKGQ) the composition is skewed to low complexity. Over residues 1045 to 1054 (GAKGDGGPAG) the composition is skewed to gly residues. Over residues 1056–1074 (AGATGEPGPRGEPGAPGEE) the composition is skewed to low complexity. Over residues 1084 to 1093 (GAPGGSGLPG) the composition is skewed to gly residues. Residues 1175-1205 (PLGLMGPEGEPGIPGYRGHQGQPGPSGLPGP) are compositionally biased toward low complexity. A compositionally biased stretch (basic and acidic residues) spans 1237 to 1246 (TGEHGEEGYK). Low complexity predominate over residues 1323–1339 (YPGKPGLPGKQGLLGVP). Over residues 1352-1361 (GPQGGKGASG) the composition is skewed to gly residues. 2 stretches are compositionally biased toward low complexity: residues 1371–1386 (PKGE…VPGQ) and 1434–1444 (IVGIVGPKGPI). The segment covering 1485–1495 (QPGPPGPPGAP) has biased composition (pro residues). Residues 1534–1733 (SDIFKTLTYL…YIESNSVCFL (200 aa)) form the Fibrillar collagen NC1 domain.

This sequence belongs to the fibrillar collagen family. Expressed in skeleton. Found at ossification centers of the craniofacial, axial and appendicular skeleton. Also expressed in retina and to a lower extent in cornea, skin and tendon.

It localises to the secreted. The protein localises to the extracellular space. It is found in the extracellular matrix. Involved in osteoblast differentiation. The chain is Collagen alpha-1(XXIV) chain (Col24a1) from Mus musculus (Mouse).